The chain runs to 245 residues: Probable transcriptional regulatory protein APH_0480 (245 aa).

The protein belongs to the TACO1 family.

Its subcellular location is the cytoplasm. This Anaplasma phagocytophilum (strain HZ) protein is Probable transcriptional regulatory protein APH_0480.